Here is a 423-residue protein sequence, read N- to C-terminus: Flotillin-1 (423 aa).

The protein belongs to the band 7/mec-2 family. Flotillin subfamily. As to quaternary structure, heterooligomeric complex of flotillin-1 and flotillin-2 and caveolin-1 and caveolin-2. Normally expressed in growing retinal exons of newly differentiated ganglion cells at the retinal margin. After optic nerve injury, expressed in all retinal ganglion cells and retinal axons. Also expressed in endothelial cells, spinal cord, larval and adult skin, muscle processes, thymus and gill macrophages.

Its subcellular location is the cell membrane. It localises to the endosome. The protein resides in the membrane. It is found in the caveola. The protein localises to the melanosome. Its subcellular location is the membrane raft. May act as a scaffolding protein within caveolar membranes, functionally participating in formation of caveolae or caveolae-like vesicles. This Carassius auratus (Goldfish) protein is Flotillin-1 (flot1).